Reading from the N-terminus, the 351-residue chain is Cyanide hydratase (351 aa).

The CN hydrolase domain occupies tyrosine 6–leucine 285. Glutamate 46 functions as the Proton acceptor in the catalytic mechanism. The active site involves lysine 128. The active-site Nucleophile is the cysteine 163.

Belongs to the carbon-nitrogen hydrolase superfamily. Nitrilase family. As to quaternary structure, oligomer of dimers, forming left-handed helical fibers with a diameter of 13 nm but with lengths ranging from approximately 1 um at the leading edge of the peak to having approximately the same length and diameter at the trailing edge.

The enzyme catalyses formamide = hydrogen cyanide + H2O. In terms of biological role, catalyzes the hydration of cyanide to formamide. Degradation of cyanide may be important for plant pathogenic fungi in infection of cyanogenic plants. The polypeptide is Cyanide hydratase (Neurospora crassa (strain ATCC 24698 / 74-OR23-1A / CBS 708.71 / DSM 1257 / FGSC 987)).